The sequence spans 557 residues: Interferon alpha/beta receptor 1 (557 aa).

Residues 1 to 27 (MMVVLLGATTLVLVAVAPWVLSAAAGG) form the signal peptide. Residues 28–436 (KNLKSPQKVE…EKTKPGNTSK (409 aa)) lie on the Extracellular side of the membrane. 4 consecutive Fibronectin type-III domains span residues 32–126 (SPQK…FRKA), 127–227 (QIGP…TVEN), 231–329 (PPEN…TEIQ), and 331–432 (FLLP…TKPG). Residues asparagine 50, asparagine 58, asparagine 81, asparagine 88, asparagine 110, and asparagine 172 are each glycosylated (N-linked (GlcNAc...) asparagine). A disulfide bond links cysteine 79 and cysteine 87. A disulfide bridge links cysteine 199 with cysteine 220. Asparagine 254 carries an N-linked (GlcNAc...) asparagine glycan. Cysteines 283 and 291 form a disulfide. Residues asparagine 313, asparagine 314, asparagine 376, asparagine 416, and asparagine 433 are each glycosylated (N-linked (GlcNAc...) asparagine). Cysteine 403 and cysteine 426 are joined by a disulfide. The chain crosses the membrane as a helical span at residues 437 to 457 (IWLIVGICIALFALPFVIYAA). The Cytoplasmic segment spans residues 458–557 (KVFLRCINYV…TSEELQQDFV (100 aa)). Cysteine 463 carries the S-palmitoyl cysteine lipid modification. Phosphotyrosine; by TYK2 occurs at positions 466 and 481. The segment at 491 to 500 (LLSTSEEQIE) is important for interaction with TYK2. Serine 495 is modified (phosphoserine). Residues lysine 501, lysine 525, and lysine 526 each participate in a glycyl lysine isopeptide (Lys-Gly) (interchain with G-Cter in ubiquitin) cross-link. The disordered stretch occupies residues 516–557 (ETNQTDEDHKKYSSQTSQDSGNYSNEDESESKTSEELQQDFV). Polar residues predominate over residues 528-539 (SSQTSQDSGNYS). Residue serine 535 is modified to Phosphoserine.

This sequence belongs to the type II cytokine receptor family. In terms of assembly, heterodimer with IFNAR2; forming the receptor for type I interferon. Interacts with TYK2. Interacts with STAT1 and STAT2; the interaction requires its phosphorylation at Tyr-466. Interacts (serine-phosphorylated form) with FBXW11, the substrate recognition component of a SCF (SKP1-CUL1-F-box protein) E3 ubiquitin-protein ligase complex. Interacts with SHMT2; this promotes interaction with ABRAXAS2 and the BRISC complex. Interacts with TRIM10; this interaction prevents association between IFNAR1 and TYK2. In terms of processing, ubiquitinated, leading to its internalization and degradation. Polyubiquitinated via 'Lys-48'-linked and 'Lys-63'-linked ubiquitin chains, leading to receptor internalization and lysosomal degradation. The 'Lys-63'-linked ubiquitin chains are cleaved off by the BRISC complex. Phosphorylated on tyrosine residues in response to interferon-binding: phosphorylation by TYK2 tyrosine kinase creates docking sites for STAT proteins. Phosphorylated on serine residues in response to interferon binding; this promotes interaction with FBXW11 and ubiquitination. Post-translationally, palmitoylation at Cys-463 is required for the activation of STAT1 and STAT2. As to expression, IFN receptors are present in all tissues and even on the surface of most IFN-resistant cells. Isoform 1, isoform 2 and isoform 3 are expressed in the IFN-alpha sensitive myeloma cell line U266B1. Isoform 2 and isoform 3 are expressed in the IFN-alpha resistant myeloma cell line U266R. Isoform 1 is not expressed in IFN-alpha resistant myeloma cell line U266R.

It localises to the cell membrane. Its subcellular location is the late endosome. It is found in the lysosome. Functionally, together with IFNAR2, forms the heterodimeric receptor for type I interferons (including interferons alpha, beta, epsilon, omega and kappa). Type I interferon binding activates the JAK-STAT signaling cascade, resulting in transcriptional activation or repression of interferon-regulated genes that encode the effectors of the interferon response. Mechanistically, type I interferon-binding brings the IFNAR1 and IFNAR2 subunits into close proximity with one another, driving their associated Janus kinases (JAKs) (TYK2 bound to IFNAR1 and JAK1 bound to IFNAR2) to cross-phosphorylate one another. The activated kinases phosphorylate specific tyrosine residues on the intracellular domains of IFNAR1 and IFNAR2, forming docking sites for the STAT transcription factors. STAT proteins are then phosphorylated by the JAKs, promoting their translocation into the nucleus to regulate expression of interferon-regulated genes. Can also act independently of IFNAR2: form an active IFNB1 receptor by itself and activate a signaling cascade that does not involve activation of the JAK-STAT pathway. The protein is Interferon alpha/beta receptor 1 (IFNAR1) of Homo sapiens (Human).